Reading from the N-terminus, the 336-residue chain is N-lysine methyltransferase KMT5A (336 aa).

Residues 1–112 (MGRGKKMSKP…KPSEQRETEC (112 aa)) form a disordered region. Positions 67–93 (SVAHHESKCPGKPLTETRKKAEVEKKR) are enriched in basic and acidic residues. Residues 200-321 (EGMKMDMITG…VGEELLYDYG (122 aa)) enclose the SET domain. S-adenosyl-L-methionine is bound by residues 210–212 (KGR), Tyr-255, and 282–283 (NH).

It belongs to the class V-like SAM-binding methyltransferase superfamily. Histone-lysine methyltransferase family. PR/SET subfamily.

It is found in the nucleus. Its subcellular location is the chromosome. It carries out the reaction L-lysyl(20)-[histone H4] + S-adenosyl-L-methionine = N(6)-methyl-L-lysyl(20)-[histone H4] + S-adenosyl-L-homocysteine + H(+). It catalyses the reaction L-lysyl-[protein] + S-adenosyl-L-methionine = N(6)-methyl-L-lysyl-[protein] + S-adenosyl-L-homocysteine + H(+). Functionally, protein-lysine N-methyltransferase that monomethylates both histones and non-histone proteins. Specifically monomethylates 'Lys-20' of histone H4 (H4K20me1). H4K20me1 is enriched during mitosis and represents a specific tag for epigenetic transcriptional repression. Mainly functions in euchromatin regions, thereby playing a central role in the silencing of euchromatic genes. Required for cell proliferation, probably by contributing to the maintenance of proper higher-order structure of DNA during mitosis. Involved in chromosome condensation and proper cytokinesis. Nucleosomes are preferred as substrate compared to free histones. Mediates monomethylation of p53/TP53 at 'Lys-382', leading to repress p53/TP53-target genes. Plays a negative role in TGF-beta response regulation and a positive role in cell migration. This is N-lysine methyltransferase KMT5A from Xenopus tropicalis (Western clawed frog).